The following is a 677-amino-acid chain: DNA ligase (677 aa).

Residues 34–38 (DAQYD), 84–85 (SL), and Glu118 each bind NAD(+). Lys120 acts as the N6-AMP-lysine intermediate in catalysis. Positions 141, 176, 283, and 307 each coordinate NAD(+). Zn(2+) contacts are provided by Cys403, Cys406, Cys421, and Cys427. In terms of domain architecture, BRCT spans 594 to 677 (ETASPISGKT…DLLKTVSNSE (84 aa)).

Belongs to the NAD-dependent DNA ligase family. LigA subfamily. Requires Mg(2+) as cofactor. The cofactor is Mn(2+).

The enzyme catalyses NAD(+) + (deoxyribonucleotide)n-3'-hydroxyl + 5'-phospho-(deoxyribonucleotide)m = (deoxyribonucleotide)n+m + AMP + beta-nicotinamide D-nucleotide.. In terms of biological role, DNA ligase that catalyzes the formation of phosphodiester linkages between 5'-phosphoryl and 3'-hydroxyl groups in double-stranded DNA using NAD as a coenzyme and as the energy source for the reaction. It is essential for DNA replication and repair of damaged DNA. In Anaplasma phagocytophilum (strain HZ), this protein is DNA ligase.